The chain runs to 126 residues: MIVGVGVDVVDVPRFRAQLERTPALRARLFTEDERDLPLRSLAARFAAKEAIAKAMGAPPGMMWHHCWIPRPDHGDGRPTVHLTGTVQAQAEALGITHWHLSLSHDGDVATAYVVAERRAAEEESA.

2 residues coordinate Mg(2+): aspartate 8 and glutamate 50.

It belongs to the P-Pant transferase superfamily. AcpS family. It depends on Mg(2+) as a cofactor.

The protein resides in the cytoplasm. The enzyme catalyses apo-[ACP] + CoA = holo-[ACP] + adenosine 3',5'-bisphosphate + H(+). Functionally, transfers the 4'-phosphopantetheine moiety from coenzyme A to a Ser of acyl-carrier-protein. The polypeptide is Holo-[acyl-carrier-protein] synthase (Micrococcus luteus (strain ATCC 4698 / DSM 20030 / JCM 1464 / CCM 169 / CCUG 5858 / IAM 1056 / NBRC 3333 / NCIMB 9278 / NCTC 2665 / VKM Ac-2230) (Micrococcus lysodeikticus)).